A 164-amino-acid chain; its full sequence is MRLIGLDGEQLGIVKIADAFRLSEQSDVDLVEIAPNADPPVCRLMDYGKFKYQEQKRQAEARSKQKVIQVKEVKFRPATDEGDYQVKLRNLRRFLEEGDKAKVTLRFRGREMAHQELGMRVLERVRDDLIELAQVEAMPKLEGRQMVMVLAPRKKAVGKPDAAG.

It belongs to the IF-3 family. As to quaternary structure, monomer.

The protein resides in the cytoplasm. Functionally, IF-3 binds to the 30S ribosomal subunit and shifts the equilibrium between 70S ribosomes and their 50S and 30S subunits in favor of the free subunits, thus enhancing the availability of 30S subunits on which protein synthesis initiation begins. This Bordetella bronchiseptica (strain ATCC BAA-588 / NCTC 13252 / RB50) (Alcaligenes bronchisepticus) protein is Translation initiation factor IF-3.